An 81-amino-acid polypeptide reads, in one-letter code: Carboxysome shell vertex protein CsoS4B (81 aa).

Residues 1–77 (MEVMRVRSDL…TDLTIGGIID (77 aa)) enclose the BMV domain.

The protein belongs to the CcmL/EutN family. CsoS4 subfamily. As to quaternary structure, homopentamer.

The protein resides in the carboxysome. Probably forms vertices in the carboxysome. Has been modeled to induce curvature upon insertion into an otherwise flat hexagonal layer of major carboxysome subunits. A minor shell protein, only 12 pentamers of CsoS4A/CsoS4B are calculated to be present in each carboxysome. The 2 CsoS4 proteins contribute to the impermeability of the carboxysome to CO(2). Its central pore is probably too small to allow passage of metabolites; its function might be to anchor different proteins or metabolites to the carboxysome. In terms of biological role, unlike beta-carboxysomes, alpha-carboxysomes (Cb) can form without cargo protein. CsoS2 is essential for Cb formation and is also capable of targeting foreign proteins to the Cb. The Cb shell assembles with the aid of CsoS2; CsoS1A, CsoS1B and CsoS1C form the majority of the shell while CsoS4A and CsoS4B form vertices. CsoS1D forms pseudohexamers that probably control metabolite flux into and out of the shell. The polypeptide is Carboxysome shell vertex protein CsoS4B (Halothiobacillus neapolitanus (strain ATCC 23641 / c2) (Thiobacillus neapolitanus)).